A 355-amino-acid chain; its full sequence is Methylthioribose-1-phosphate isomerase (355 aa).

Substrate is bound by residues 52-54 (RGA), Arg95, and Gln204. Asp245 functions as the Proton donor in the catalytic mechanism. 255–256 (NK) contributes to the substrate binding site.

Belongs to the eIF-2B alpha/beta/delta subunits family. MtnA subfamily.

The catalysed reaction is 5-(methylsulfanyl)-alpha-D-ribose 1-phosphate = 5-(methylsulfanyl)-D-ribulose 1-phosphate. It functions in the pathway amino-acid biosynthesis; L-methionine biosynthesis via salvage pathway; L-methionine from S-methyl-5-thio-alpha-D-ribose 1-phosphate: step 1/6. In terms of biological role, catalyzes the interconversion of methylthioribose-1-phosphate (MTR-1-P) into methylthioribulose-1-phosphate (MTRu-1-P). This chain is Methylthioribose-1-phosphate isomerase, found in Acaryochloris marina (strain MBIC 11017).